The chain runs to 940 residues: Isoleucine--tRNA ligase (940 aa).

Residues 58-68 carry the 'HIGH' region motif; sequence PYANGSIHIGH. Residue glutamate 564 participates in L-isoleucyl-5'-AMP binding. The 'KMSKS' region motif lies at 605-609; the sequence is KMSKS. Lysine 608 contributes to the ATP binding site. Zn(2+) is bound by residues cysteine 903, cysteine 906, cysteine 923, and cysteine 926.

The protein belongs to the class-I aminoacyl-tRNA synthetase family. IleS type 1 subfamily. In terms of assembly, monomer. Zn(2+) is required as a cofactor.

It is found in the cytoplasm. It carries out the reaction tRNA(Ile) + L-isoleucine + ATP = L-isoleucyl-tRNA(Ile) + AMP + diphosphate. Functionally, catalyzes the attachment of isoleucine to tRNA(Ile). As IleRS can inadvertently accommodate and process structurally similar amino acids such as valine, to avoid such errors it has two additional distinct tRNA(Ile)-dependent editing activities. One activity is designated as 'pretransfer' editing and involves the hydrolysis of activated Val-AMP. The other activity is designated 'posttransfer' editing and involves deacylation of mischarged Val-tRNA(Ile). The chain is Isoleucine--tRNA ligase from Shewanella baltica (strain OS155 / ATCC BAA-1091).